Reading from the N-terminus, the 247-residue chain is Triosephosphate isomerase (247 aa).

Substrate is bound by residues Asn-10 and Lys-12. His-94 (electrophile) is an active-site residue. The Proton acceptor role is filled by Glu-164.

Belongs to the triosephosphate isomerase family. Homodimer.

The protein localises to the cytoplasm. It carries out the reaction D-glyceraldehyde 3-phosphate = dihydroxyacetone phosphate. It catalyses the reaction dihydroxyacetone phosphate = methylglyoxal + phosphate. It functions in the pathway carbohydrate biosynthesis; gluconeogenesis. The protein operates within carbohydrate degradation; glycolysis; D-glyceraldehyde 3-phosphate from glycerone phosphate: step 1/1. Functionally, triosephosphate isomerase is an extremely efficient metabolic enzyme that catalyzes the interconversion between dihydroxyacetone phosphate (DHAP) and D-glyceraldehyde-3-phosphate (G3P) in glycolysis and gluconeogenesis. In terms of biological role, it is also responsible for the non-negligible production of methylglyoxal a reactive cytotoxic side-product that modifies and can alter proteins, DNA and lipids. The protein is Triosephosphate isomerase (tpi-1) of Caenorhabditis elegans.